Consider the following 458-residue polypeptide: Elongation factor 1-alpha (458 aa).

Residue Gly2 is modified to N,N,N-trimethylglycine. Lys3 is modified (N6,N6-dimethyllysine; alternate). Position 3 is an N6-methyllysine; alternate (Lys3). The tr-type G domain maps to 5 to 240; that stretch reads KTHVNVVVIG…DAIEPPVRPS (236 aa). Residues 14–21 are G1; it reads GHVDSGKS. 14–21 serves as a coordination point for GTP; sequence GHVDSGKS. Lys30 is modified (N6-methyllysine). The interval 70-74 is G2; sequence GITID. Lys79 bears the N6,N6,N6-trimethyllysine mark. The segment at 91–94 is G3; sequence DAPG. GTP is bound by residues 91 to 95 and 153 to 156; these read DAPGH and NKMD. The interval 153 to 156 is G4; it reads NKMD. Residues 192 to 194 are G5; it reads SGW. An N6,N6-dimethyllysine; alternate modification is found at Lys316. Lys316 is modified (N6-methyllysine; alternate). Position 390 is an N6-methyllysine (Lys390).

The protein belongs to the TRAFAC class translation factor GTPase superfamily. Classic translation factor GTPase family. EF-Tu/EF-1A subfamily.

The protein resides in the cytoplasm. Its function is as follows. This protein promotes the GTP-dependent binding of aminoacyl-tRNA to the A-site of ribosomes during protein biosynthesis. This is Elongation factor 1-alpha (TEF-1) from Mucor circinelloides f. lusitanicus (Mucor racemosus var. lusitanicus).